A 72-amino-acid chain; its full sequence is MRQEIHPKYTEVTVTCSCGNTFVTRSTAGKKEMNIDICSECHPFYTGKQRIVDTAGRVDKFKKRFGGMKKYN.

Residues cysteine 16, cysteine 18, cysteine 38, and cysteine 41 each contribute to the Zn(2+) site.

The protein belongs to the bacterial ribosomal protein bL31 family. Type A subfamily. Part of the 50S ribosomal subunit. The cofactor is Zn(2+).

Binds the 23S rRNA. This is Large ribosomal subunit protein bL31 from Francisella tularensis subsp. holarctica (strain LVS).